We begin with the raw amino-acid sequence, 138 residues long: Beta-lactamase HcpB (138 aa).

TPR repeat units lie at residues 1 to 28, 57 to 94, and 97 to 130; these read MVGG…NEMF, GNGC…NDQD, and LILG…GSED. 4 disulfide bridges follow: Cys-22-Cys-30, Cys-52-Cys-60, Cys-88-Cys-96, and Cys-124-Cys-132.

The protein belongs to the hcp beta-lactamase family.

The enzyme catalyses a beta-lactam + H2O = a substituted beta-amino acid. In terms of biological role, hydrolyzes 6-aminopenicillinic acid and 7-aminocephalosporanic acid (ACA) derivatives. This is Beta-lactamase HcpB (hcpB) from Helicobacter pylori (strain ATCC 700392 / 26695) (Campylobacter pylori).